We begin with the raw amino-acid sequence, 229 residues long: 7-cyano-7-deazaguanine synthase (229 aa).

An ATP-binding site is contributed by 14 to 24 (LSGGQDSTTCL). Residues C192, C200, C203, and C206 each coordinate Zn(2+).

Belongs to the QueC family. Zn(2+) is required as a cofactor.

It carries out the reaction 7-carboxy-7-deazaguanine + NH4(+) + ATP = 7-cyano-7-deazaguanine + ADP + phosphate + H2O + H(+). The protein operates within purine metabolism; 7-cyano-7-deazaguanine biosynthesis. Functionally, catalyzes the ATP-dependent conversion of 7-carboxy-7-deazaguanine (CDG) to 7-cyano-7-deazaguanine (preQ(0)). This is 7-cyano-7-deazaguanine synthase from Laribacter hongkongensis (strain HLHK9).